The chain runs to 58 residues: Small ribosomal subunit protein bS21 (58 aa).

Belongs to the bacterial ribosomal protein bS21 family.

The polypeptide is Small ribosomal subunit protein bS21 (Lactobacillus johnsonii (strain CNCM I-12250 / La1 / NCC 533)).